A 39-amino-acid chain; its full sequence is Cytochrome b559 subunit beta (39 aa).

Residues tryptophan 14 to alanine 30 traverse the membrane as a helical segment. Histidine 18 contacts heme.

The protein belongs to the PsbE/PsbF family. In terms of assembly, heterodimer of an alpha subunit and a beta subunit. PSII is composed of 1 copy each of membrane proteins PsbA, PsbB, PsbC, PsbD, PsbE, PsbF, PsbH, PsbI, PsbJ, PsbK, PsbL, PsbM, PsbT, PsbX, PsbY, PsbZ, Psb30/Ycf12, at least 3 peripheral proteins of the oxygen-evolving complex and a large number of cofactors. It forms dimeric complexes. It depends on heme b as a cofactor.

The protein resides in the plastid. Its subcellular location is the chloroplast thylakoid membrane. Its function is as follows. This b-type cytochrome is tightly associated with the reaction center of photosystem II (PSII). PSII is a light-driven water:plastoquinone oxidoreductase that uses light energy to abstract electrons from H(2)O, generating O(2) and a proton gradient subsequently used for ATP formation. It consists of a core antenna complex that captures photons, and an electron transfer chain that converts photonic excitation into a charge separation. In Physcomitrium patens (Spreading-leaved earth moss), this protein is Cytochrome b559 subunit beta.